The primary structure comprises 546 residues: Elongator complex protein 3 (546 aa).

One can recognise a Radical SAM core domain in the interval 81 to 371 (RTASGIAVVA…YRVQRDIPMP (291 aa)). [4Fe-4S] cluster-binding residues include Cys-98, Cys-108, and Cys-111. Acetyl-CoA-binding positions include Lys-163, 473–476 (ELHV), 496–498 (FGM), and Tyr-529. The N-acetyltransferase domain occupies 395–546 (TQCRDVRTRE…EGPYMVKRLQ (152 aa)).

The protein belongs to the ELP3 family. As to quaternary structure, component of the elongator complex. [4Fe-4S] cluster serves as cofactor.

The protein resides in the cytoplasm. The protein localises to the nucleus. It catalyses the reaction uridine(34) in tRNA + acetyl-CoA + S-adenosyl-L-methionine + H2O = 5-(carboxymethyl)uridine(34) in tRNA + 5'-deoxyadenosine + L-methionine + CoA + 2 H(+). It participates in tRNA modification; 5-methoxycarbonylmethyl-2-thiouridine-tRNA biosynthesis. Functionally, catalytic tRNA acetyltransferase subunit of the elongator complex which is required for multiple tRNA modifications, including mcm5U (5-methoxycarbonylmethyl uridine), mcm5s2U (5-methoxycarbonylmethyl-2-thiouridine), and ncm5U (5-carbamoylmethyl uridine). In the elongator complex, acts as a tRNA uridine(34) acetyltransferase by mediating formation of carboxymethyluridine in the wobble base at position 34 in tRNAs. The sequence is that of Elongator complex protein 3 from Gallus gallus (Chicken).